A 452-amino-acid polypeptide reads, in one-letter code: Bis(5'-adenosyl)-triphosphatase enpp4 (452 aa).

The first 19 residues, 1–19 (MFGRVFIVAVLYCITICKG), serve as a signal peptide directing secretion. At 20 to 407 (EDPTNSSTPK…NQWCIQVSEA (388 aa)) the chain is on the extracellular side. Asn-24 carries an N-linked (GlcNAc...) asparagine glycan. Residues Asp-36 and Thr-72 each coordinate Zn(2+). The active-site AMP-threonine intermediate is the Thr-72. A substrate-binding site is contributed by Asn-93. Asn-107 carries an N-linked (GlcNAc...) asparagine glycan. Tyr-154 is a substrate binding site. Asn-155 and Asn-175 each carry an N-linked (GlcNAc...) asparagine glycan. Asp-189 and His-193 together coordinate Zn(2+). Asp-189 contributes to the substrate binding site. Residue Asn-202 is glycosylated (N-linked (GlcNAc...) asparagine). Residues Asp-237 and His-238 each contribute to the Zn(2+) site. A disulfide bridge connects residues Cys-254 and Cys-287. N-linked (GlcNAc...) asparagine glycosylation is found at Asn-259 and Asn-327. Residue His-336 participates in Zn(2+) binding. N-linked (GlcNAc...) asparagine glycosylation is present at Asn-386. The cysteines at positions 394 and 401 are disulfide-linked. The chain crosses the membrane as a helical span at residues 408–428 (IGIVIGAIMVLTTLTCIIIML). At 429–452 (KKKMPSARPFSRLQFQDDDDPLIG) the chain is on the cytoplasmic side.

The protein belongs to the nucleotide pyrophosphatase/phosphodiesterase family. It depends on Zn(2+) as a cofactor.

The protein localises to the cell membrane. The catalysed reaction is P(1),P(3)-bis(5'-adenosyl) triphosphate + H2O = AMP + ADP + 2 H(+). In terms of biological role, hydrolyzes extracellular Ap3A into AMP and ADP, and Ap4A into AMP and ATP. Ap3A and Ap4A are diadenosine polyphosphates thought to induce proliferation of vascular smooth muscle cells. Acts as a procoagulant, mediating platelet aggregation at the site of nascent thrombus via release of ADP from Ap3A and activation of ADP receptors. This Xenopus laevis (African clawed frog) protein is Bis(5'-adenosyl)-triphosphatase enpp4 (enpp4).